The chain runs to 397 residues: Formate-dependent phosphoribosylglycinamide formyltransferase (397 aa).

N(1)-(5-phospho-beta-D-ribosyl)glycinamide-binding positions include 21 to 22 (EL) and Glu81. ATP contacts are provided by residues Arg113, Lys154, 194–197 (EEYV), and Glu202. One can recognise an ATP-grasp domain in the interval 118–313 (KLAAEKVKVP…EFQIHVRSAL (196 aa)). The Mg(2+) site is built by Glu272 and Glu284. Residues Asp291, Lys361, and 368-369 (RR) contribute to the N(1)-(5-phospho-beta-D-ribosyl)glycinamide site.

This sequence belongs to the PurK/PurT family. In terms of assembly, homodimer.

It catalyses the reaction N(1)-(5-phospho-beta-D-ribosyl)glycinamide + formate + ATP = N(2)-formyl-N(1)-(5-phospho-beta-D-ribosyl)glycinamide + ADP + phosphate + H(+). It functions in the pathway purine metabolism; IMP biosynthesis via de novo pathway; N(2)-formyl-N(1)-(5-phospho-D-ribosyl)glycinamide from N(1)-(5-phospho-D-ribosyl)glycinamide (formate route): step 1/1. Its function is as follows. Involved in the de novo purine biosynthesis. Catalyzes the transfer of formate to 5-phospho-ribosyl-glycinamide (GAR), producing 5-phospho-ribosyl-N-formylglycinamide (FGAR). Formate is provided by PurU via hydrolysis of 10-formyl-tetrahydrofolate. The polypeptide is Formate-dependent phosphoribosylglycinamide formyltransferase (Sulfurisphaera tokodaii (strain DSM 16993 / JCM 10545 / NBRC 100140 / 7) (Sulfolobus tokodaii)).